Consider the following 115-residue polypeptide: Large ribosomal subunit protein bL20 (115 aa).

The protein belongs to the bacterial ribosomal protein bL20 family.

Its function is as follows. Binds directly to 23S ribosomal RNA and is necessary for the in vitro assembly process of the 50S ribosomal subunit. It is not involved in the protein synthesizing functions of that subunit. This chain is Large ribosomal subunit protein bL20, found in Pelodictyon phaeoclathratiforme (strain DSM 5477 / BU-1).